The following is a 105-amino-acid chain: Probable guanidinium efflux system subunit GdnD (105 aa).

4 helical membrane-spanning segments follow: residues 1–21 (MLHW…VALM), 32–52 (WVLL…YAME), 59–79 (AYAV…ILFY), and 85–105 (AKRI…KILS).

It belongs to the drug/metabolite transporter (DMT) superfamily. Small multidrug resistance (SMR) (TC 2.A.7.1) family. YkkC/YkkD subfamily. As to quaternary structure, the efflux pump is composed of GdnC and GdnD.

It localises to the cell membrane. Probably involved in guanidinium transport. In vitro, confers resistance to a broad range of toxic compounds such as cationic dyes, neutral and anionic antimicrobials. The protein is Probable guanidinium efflux system subunit GdnD of Bacillus subtilis (strain 168).